Reading from the N-terminus, the 435-residue chain is ATP-dependent Clp protease ATP-binding subunit ClpX 3 (435 aa).

The ClpX-type ZB domain occupies 1–53 (MSSDPPAKTQHCSFCGIEQGRDTPLIAGIEGQICEACVRLAEQVVANWGRKRS). Zn(2+) contacts are provided by Cys-12, Cys-15, Cys-34, and Cys-37. 125–132 (PTGTGKTL) contacts ATP.

It belongs to the ClpX chaperone family. As to quaternary structure, component of the ClpX-ClpP complex. Forms a hexameric ring that, in the presence of ATP, binds to fourteen ClpP subunits assembled into a disk-like structure with a central cavity, resembling the structure of eukaryotic proteasomes.

Functionally, ATP-dependent specificity component of the Clp protease. It directs the protease to specific substrates. Can perform chaperone functions in the absence of ClpP. The polypeptide is ATP-dependent Clp protease ATP-binding subunit ClpX 3 (Methylococcus capsulatus (strain ATCC 33009 / NCIMB 11132 / Bath)).